We begin with the raw amino-acid sequence, 697 residues long: CENP-A multicopy suppressor protein 2 (697 aa).

Residues Cys-351–Cys-378 form a GATA-type; atypical zinc finger. The interval Pro-443–Asn-484 is disordered. Residues Asn-445–Ser-455 are compositionally biased toward polar residues.

As to quaternary structure, interacts with CENP-A.

The protein localises to the nucleus. The protein resides in the chromosome. It is found in the centromere. Required for proper chromosome segregation via regulation of CENP-A localization to the centromere. This is CENP-A multicopy suppressor protein 2 (ams2) from Schizosaccharomyces pombe (strain 972 / ATCC 24843) (Fission yeast).